A 426-amino-acid polypeptide reads, in one-letter code: Histidine--tRNA ligase (426 aa).

It belongs to the class-II aminoacyl-tRNA synthetase family. Homodimer.

The protein resides in the cytoplasm. It catalyses the reaction tRNA(His) + L-histidine + ATP = L-histidyl-tRNA(His) + AMP + diphosphate + H(+). This Legionella pneumophila (strain Paris) protein is Histidine--tRNA ligase.